The following is a 489-amino-acid chain: Endoglucanase 4 (489 aa).

The signal sequence occupies residues 1–25; it reads MAGKSFMTPAIMLAMLLLISPETYA. The active-site Nucleophile is Asp81. The active site involves His409. N-linked (GlcNAc...) asparagine glycosylation occurs at Asn453. Active-site residues include Asp460 and Glu469.

It belongs to the glycosyl hydrolase 9 (cellulase E) family.

It is found in the secreted. It catalyses the reaction Endohydrolysis of (1-&gt;4)-beta-D-glucosidic linkages in cellulose, lichenin and cereal beta-D-glucans.. The chain is Endoglucanase 4 from Arabidopsis thaliana (Mouse-ear cress).